Reading from the N-terminus, the 406-residue chain is Phosphopentomutase (406 aa).

The Mn(2+) site is built by Asp10, Asp305, His310, Asp346, His347, and His358.

Belongs to the phosphopentomutase family. Mn(2+) serves as cofactor.

The protein localises to the cytoplasm. The catalysed reaction is 2-deoxy-alpha-D-ribose 1-phosphate = 2-deoxy-D-ribose 5-phosphate. It carries out the reaction alpha-D-ribose 1-phosphate = D-ribose 5-phosphate. It functions in the pathway carbohydrate degradation; 2-deoxy-D-ribose 1-phosphate degradation; D-glyceraldehyde 3-phosphate and acetaldehyde from 2-deoxy-alpha-D-ribose 1-phosphate: step 1/2. Isomerase that catalyzes the conversion of deoxy-ribose 1-phosphate (dRib-1-P) and ribose 1-phosphate (Rib-1-P) to deoxy-ribose 5-phosphate (dRib-5-P) and ribose 5-phosphate (Rib-5-P), respectively. The chain is Phosphopentomutase from Vibrio vulnificus (strain CMCP6).